A 319-amino-acid chain; its full sequence is Protease HtpX homolog (319 aa).

2 helical membrane-spanning segments follow: residues 6 to 26 (TAMLLAFMTVLFMAVGYVIGG) and 28 to 48 (GGMMIALVIAAGMNFFSYWNS). H130 lines the Zn(2+) pocket. E131 is an active-site residue. H134 is a binding site for Zn(2+). The next 2 membrane-spanning stretches (helical) occupy residues 145–165 (MTATLAGAISMLGNFAFFFGG) and 172–192 (PLGFIGVLIAMIVAPLAAALV). E201 serves as a coordination point for Zn(2+). A disordered region spans residues 280–319 (EMSTGSTAPVRPDNAVRKSRSVPRTGWGRGGSEPPKGPWS).

The protein belongs to the peptidase M48B family. Zn(2+) serves as cofactor.

It localises to the cell inner membrane. The polypeptide is Protease HtpX homolog (Sinorhizobium medicae (strain WSM419) (Ensifer medicae)).